Reading from the N-terminus, the 496-residue chain is Autophagy-related protein 21 (496 aa).

Residues 41 to 86 form a disordered region; the sequence is SKKKTSNNNGSASNSESRNNEESILITNGSRDRTDAEEEEDNEDNA. Over residues 46–57 the composition is skewed to low complexity; the sequence is SNNNGSASNSES. Acidic residues predominate over residues 75-84; sequence DAEEEEDNED. The residue at position 213 (Thr-213) is a Phosphothreonine. At Ser-237 the chain carries Phosphoserine. 3 WD repeats span residues 294 to 334, 346 to 385, and 448 to 488; these read VHKG…DYMS, TRLC…NSLP, and VNES…GECV. The short motif at 342-346 is the L/FRRG motif element; the sequence is FRRGT.

Belongs to the WD repeat PROPPIN family.

The protein resides in the cytoplasm. The protein localises to the vacuole. Its function is as follows. Required for cytoplasm to vacuole transport (Cvt) vesicles formation and mitophagy. Involved in binding of phosphatidylethanolamine to ATG8 and in recruitment of ATG8 and ATG5 to the pre-autophagosomal structure. Protects ATG8 from ARG4-mediated cleavage. Essential for maturation of proaminopeptidase I. This chain is Autophagy-related protein 21 (ATG21), found in Saccharomyces cerevisiae (strain ATCC 204508 / S288c) (Baker's yeast).